A 491-amino-acid chain; its full sequence is Sucrose transport protein SUC9 (491 aa).

Positions 1 to 12 (MSDIQAKEDAAP) are enriched in basic and acidic residues. Positions 1–26 (MSDIQAKEDAAPVDRQSSSSVVVPDE) are disordered. The Cytoplasmic segment spans residues 1–33 (MSDIQAKEDAAPVDRQSSSSVVVPDEPSPLRKM). At serine 17 the chain carries Phosphoserine. Residues 34 to 54 (ISVASIAAGIQFGWALQLSLL) traverse the membrane as a helical segment. Topologically, residues 55–68 (TPYVQLLGVPHKWS) are extracellular. A helical transmembrane segment spans residues 69-89 (SFIWLCGPISGLLVQPTVGYF). At 90-101 (SDRCKSRFGRRR) the chain is on the cytoplasmic side. A helical transmembrane segment spans residues 102 to 122 (PFIATGALLVALAVILIGFAA). The Extracellular portion of the chain corresponds to 123–139 (DFGHTMGDKLDEAVKIR). The helical transmembrane segment at 140-160 (AVGFFVVGFWILDVANNTLQG) threads the bilayer. Topologically, residues 161 to 181 (PCRAFLGDLAAGDAKKTRTAN) are cytoplasmic. The chain crosses the membrane as a helical span at residues 182–202 (AIFSFFMAVGNVLGYAAGSYT). Residues 203-224 (NLHKIFPFTVTKACDIYCANLK) are Extracellular-facing. A helical membrane pass occupies residues 225–245 (SCFIISITLLIVLTIIALWYV). Topologically, residues 246–277 (EDKQWSPNADSDNEKTPFFGEIFGAFKVMKRP) are cytoplasmic. Residues 278–298 (MWMLLAVTALNWIAWFPFLLY) traverse the membrane as a helical segment. Residues 299 to 329 (DTDWMGREVYGGDSAGDDKMKKLYNHGIQVG) are Extracellular-facing. The chain crosses the membrane as a helical span at residues 330–350 (SLGLMLNSIVLGVMSLVIGVI). At 351 to 358 (SKKIGAKR) the chain is on the cytoplasmic side. The helical transmembrane segment at 359–379 (LWGAVNIILAVCLAMTVLVTK) threads the bilayer. Residues 380 to 406 (KAEEHRKIAGRMALPTNAIRDGALSLF) lie on the Extracellular side of the membrane. Residues 407–427 (AILGIPLAITFSIPFALASII) traverse the membrane as a helical segment. Residues 428–443 (SSSSGAGQGLSLGVLN) lie on the Cytoplasmic side of the membrane. The helical transmembrane segment at 444–464 (MAIVIPQMIVSFGVGPIDALF) threads the bilayer. Over 465 to 468 (GGGN) the chain is Extracellular. The chain crosses the membrane as a helical span at residues 469 to 489 (LPGFVVGAIAALISSVVALTV). The Cytoplasmic segment spans residues 490 to 491 (LP).

It belongs to the glycoside-pentoside-hexuronide (GPH) cation symporter transporter (TC 2.A.2.4) family. In terms of tissue distribution, widely expressed.

Its subcellular location is the cell membrane. It carries out the reaction sucrose(out) + H(+)(out) = sucrose(in) + H(+)(in). It functions in the pathway glycan biosynthesis; sucrose metabolism. With respect to regulation, inhibited by protonophores (e.g. carbonyl cyanide m-chlorophenyl-hydrazone (CCCP)) and SH group inhibitors (e.g. p-chloromercuribenzene sulphonic acid (PCMBS)). High-affinity sucrose transporter. Responsible for the transport of sucrose into the cell, with the concomitant uptake of protons (symport system). Can also transport a wide range of glucosides, such as helicin, salicin, arbutin, maltose, fraxin, esculin, uranose, alpha-methylglucoside, alpha-phenylglucoside and beta-phenylglucoside. Plays a role in flowering time transition delay. The sequence is that of Sucrose transport protein SUC9 from Arabidopsis thaliana (Mouse-ear cress).